Reading from the N-terminus, the 474-residue chain is Nitric oxide reductase subunit B (474 aa).

The chain crosses the membrane as a helical span at residues 19-39; that stretch reads YFVFALILFVGQVLFGLIMGL. Histidine 60 is a binding site for heme b. Transmembrane regions (helical) follow at residues 61-81, 95-115, 145-165, 169-189, 207-227, 243-263, 270-290, and 308-328; these read TNLLIVWLLFGFMGAAYYLIP, IILFWVFAAAGVLTILGYLFV, IGIVVVALGFLYNIGMTMLKG, VVSTVMMTGLIGLAVFFLFAF, HLWVEGVWELIMGAMLAFVLI, VIIAMALITGIIGTGHHFFWI, LWVGSIFSALEPLPFFAMVLF, and SLWAIGTTVTAFLGAGVWGFM. Residues histidine 207, histidine 258, and histidine 259 each contribute to the Fe cation site. Heme b is bound by residues histidine 347 and histidine 349. 3 helical membrane-spanning segments follow: residues 348-368, 390-410, and 433-453; these read GHLAFYGAYAMIVMTMISYAM, FWLMTISMIAITLFLTAAGVV, and LAIFFWLRFIAGVFFLIGLVC.

This sequence belongs to the heme-copper respiratory oxidase family. Heterodimer of cytochromes b (large subunit) and c (small subunit).

It is found in the cell membrane. It catalyses the reaction nitrous oxide + 2 Fe(III)-[cytochrome c] + H2O = 2 nitric oxide + 2 Fe(II)-[cytochrome c] + 2 H(+). It participates in nitrogen metabolism; nitrate reduction (denitrification); dinitrogen from nitrate: step 3/4. Its function is as follows. Component of the anaerobic respiratory chain that transforms nitrate to dinitrogen (denitrification). NorB is the catalytic subunit of the enzyme complex. Shows proton pump activity across the membrane in denitrifying bacterial cells. The mononitrogen reduction is probably coupled to electron transport phosphorylation. This chain is Nitric oxide reductase subunit B (norB), found in Stutzerimonas stutzeri (Pseudomonas stutzeri).